The primary structure comprises 621 residues: F-box only protein 21 (621 aa).

One can recognise an F-box domain in the interval 28-77; sequence SCLVNLPGEVLEYILCCGSLTAADIGRVSSTCRRLRELCQSSGKVWKEQF.

In terms of assembly, interacts with SKP1 and CUL1.

Substrate-recognition component of the SCF (SKP1-CUL1-F-box protein)-type E3 ubiquitin ligase complex. This is F-box only protein 21 (FBXO21) from Pongo abelii (Sumatran orangutan).